A 160-amino-acid polypeptide reads, in one-letter code: Transcription elongation factor GreA (160 aa).

It belongs to the GreA/GreB family.

Its function is as follows. Necessary for efficient RNA polymerase transcription elongation past template-encoded arresting sites. The arresting sites in DNA have the property of trapping a certain fraction of elongating RNA polymerases that pass through, resulting in locked ternary complexes. Cleavage of the nascent transcript by cleavage factors such as GreA or GreB allows the resumption of elongation from the new 3'terminus. GreA releases sequences of 2 to 3 nucleotides. This is Transcription elongation factor GreA from Leuconostoc citreum (strain KM20).